The primary structure comprises 82 residues: MVTIRLARGGAKKRPFYNIVVADSRNARDGRFIERVGFFNPLARGQEETLRLDLARVEHWVSNGAATTDRVAKLIKDAKAAA.

This sequence belongs to the bacterial ribosomal protein bS16 family.

The sequence is that of Small ribosomal subunit protein bS16 from Shewanella sp. (strain MR-4).